Reading from the N-terminus, the 306-residue chain is Glutaminase (306 aa).

Residues S61, N111, E157, N164, Y188, Y240, and V258 each contribute to the substrate site.

Belongs to the glutaminase family. As to quaternary structure, homotetramer.

It catalyses the reaction L-glutamine + H2O = L-glutamate + NH4(+). This chain is Glutaminase, found in Pseudoalteromonas atlantica (strain T6c / ATCC BAA-1087).